The following is a 253-amino-acid chain: Porin thermoregulatory protein EnvY (253 aa).

The HTH araC/xylS-type domain maps to 149 to 246 (DSVCRIIQSD…GLTPLNYLAK (98 aa)). 2 consecutive DNA-binding regions (H-T-H motif) follow at residues 166–187 (RIVA…KNEN) and 213–236 (ITQV…KAFY).

Influences the temperature-dependent expression of several E.coli envelope proteins, most notably the porins OmpF and OmpC and the lambda receptor, LamB. This is Porin thermoregulatory protein EnvY (envY) from Escherichia coli (strain K12).